The chain runs to 444 residues: ATP-dependent protease ATPase subunit HslU (444 aa).

ATP is bound by residues isoleucine 18 and 60–65; that span reads GVGKTE. Residues 141–161 are disordered; that stretch reads DAWGNNEEGDNDSGTRQSFRK. Aspartate 257, glutamate 322, and arginine 394 together coordinate ATP.

This sequence belongs to the ClpX chaperone family. HslU subfamily. In terms of assembly, a double ring-shaped homohexamer of HslV is capped on each side by a ring-shaped HslU homohexamer. The assembly of the HslU/HslV complex is dependent on binding of ATP.

It is found in the cytoplasm. ATPase subunit of a proteasome-like degradation complex; this subunit has chaperone activity. The binding of ATP and its subsequent hydrolysis by HslU are essential for unfolding of protein substrates subsequently hydrolyzed by HslV. HslU recognizes the N-terminal part of its protein substrates and unfolds these before they are guided to HslV for hydrolysis. The sequence is that of ATP-dependent protease ATPase subunit HslU from Aliivibrio fischeri (strain MJ11) (Vibrio fischeri).